We begin with the raw amino-acid sequence, 440 residues long: Xylose isomerase (440 aa).

Catalysis depends on residues H101 and D104. Positions 232, 268, 271, 296, 307, 309, and 339 each coordinate Mg(2+).

It belongs to the xylose isomerase family. In terms of assembly, homotetramer. Mg(2+) is required as a cofactor.

Its subcellular location is the cytoplasm. The enzyme catalyses alpha-D-xylose = alpha-D-xylulofuranose. This chain is Xylose isomerase, found in Escherichia coli (strain SE11).